Reading from the N-terminus, the 299-residue chain is MPIIIPQDLPARRILDAESVFTLGDADARRQDIRALQVVVLNLMPTKVTTETQIARVLANTPLQVELTLIHTASYQPTHTDPEHLRNFYSTFDQIRDRQFDGLIVTGAPVETLPWLAVDYWSELTTILDWSREAVRSSLFICWGAQAALQHFHGIEKQTLPAKRFGVFWHHLRDRSSPLVRGHDDDFLVPVSRHTEVIAAEVLAQSQLQILAESSEAGLHLLWDADQHRTYLFNHPEYDADTLDREYRRDREKGLPIQLPLNYYPNDDPNQVPTVRWRSHAQLLYTNWLNYEVYQPLSR.

Catalysis depends on Cys142, which acts as the Acyl-thioester intermediate. Substrate-binding residues include Lys163 and Ser192. His235 serves as the catalytic Proton acceptor. Glu237 is an active-site residue. A substrate-binding site is contributed by Arg249.

Belongs to the MetA family.

The protein resides in the cytoplasm. The enzyme catalyses L-homoserine + acetyl-CoA = O-acetyl-L-homoserine + CoA. It functions in the pathway amino-acid biosynthesis; L-methionine biosynthesis via de novo pathway; O-acetyl-L-homoserine from L-homoserine: step 1/1. In terms of biological role, transfers an acetyl group from acetyl-CoA to L-homoserine, forming acetyl-L-homoserine. In Synechococcus sp. (strain ATCC 27144 / PCC 6301 / SAUG 1402/1) (Anacystis nidulans), this protein is Homoserine O-acetyltransferase.